The sequence spans 75 residues: Small ribosomal subunit protein bS18 (75 aa).

The protein belongs to the bacterial ribosomal protein bS18 family. As to quaternary structure, part of the 30S ribosomal subunit. Forms a tight heterodimer with protein bS6.

In terms of biological role, binds as a heterodimer with protein bS6 to the central domain of the 16S rRNA, where it helps stabilize the platform of the 30S subunit. In Pseudoalteromonas translucida (strain TAC 125), this protein is Small ribosomal subunit protein bS18.